A 219-amino-acid chain; its full sequence is Envelope protein UL45 homolog (219 aa).

At 1 to 57 the chain is on the intravirion side; that stretch reads MEDYKLLQLETATVDAQAPPLPTKTVPVFAPPLSTPPQPNELVYTKRRRTKRKAKCR. Residues 58–78 traverse the membrane as a helical; Signal-anchor for type II membrane protein segment; that stretch reads CLFFTMGMFALGVLMTTAILV. Topologically, residues 79 to 219 are virion surface; that stretch reads STFILTVPIG…RLDHIIPFPR (141 aa). Asn113, Asn120, and Asn138 each carry an N-linked (GlcNAc...) asparagine; by host glycan.

Belongs to the herpesviridae HHV-1 UL45 family. Post-translationally, N-glycosylated.

It is found in the virion membrane. This Equine herpesvirus 1 (strain Ab4p) (EHV-1) protein is Envelope protein UL45 homolog.